We begin with the raw amino-acid sequence, 217 residues long: Heart- and neural crest derivatives-expressed protein 2 (217 aa).

Residues 76–116 form a disordered region; sequence DHSHYGGVPPGAGPPGLGGPRPVKRRGTANRKERRRTQSIN. The span at 83–94 shows a compositional bias: gly residues; sequence VPPGAGPPGLGG. The span at 97–112 shows a compositional bias: basic residues; that stretch reads PVKRRGTANRKERRRT. One can recognise a bHLH domain in the interval 99–151; sequence KRRGTANRKERRRTQSINSAFAELRECIPNVPADTKLSKIKTLRLATSYIAYL.

Efficient DNA binding requires dimerization with another bHLH protein. Forms homodimers and heterodimers with TCF3 gene products E12 and E47, HAND1 and HEY1, HEY2 and HEYL (hairy-related transcription factors).

The protein localises to the nucleus. Its function is as follows. Essential for cardiac morphogenesis, particularly for the formation of the right ventricle and of the aortic arch arteries. Required for vascular development and regulation of angiogenesis, possibly through a VEGF signaling pathway. Also plays an important role in limb development, particularly in the establishment of anterior-posterior polarization, acting as an upstream regulator of sonic hedgehog (SHH) induction in the limb bud. Is involved in the development of branchial arches, which give rise to unique structures in the head and neck. Binds DNA on E-box consensus sequence 5'-CANNTG-3'. The chain is Heart- and neural crest derivatives-expressed protein 2 (Hand2) from Rattus norvegicus (Rat).